Here is a 36-residue protein sequence, read N- to C-terminus: Adenylate kinase (36 aa).

10 to 15 (GAGKGT) serves as a coordination point for ATP. Residues 30–36 (ATGDLFR) form an NMP region. AMP-binding residues include T31 and R36.

It belongs to the adenylate kinase family. In terms of assembly, monomer.

The protein resides in the cytoplasm. It catalyses the reaction AMP + ATP = 2 ADP. It participates in purine metabolism; AMP biosynthesis via salvage pathway; AMP from ADP: step 1/1. Its function is as follows. Catalyzes the reversible transfer of the terminal phosphate group between ATP and AMP. Plays an important role in cellular energy homeostasis and in adenine nucleotide metabolism. The polypeptide is Adenylate kinase (adk) (Streptomyces griseus).